Consider the following 630-residue polypeptide: CREB-regulated transcription coactivator 1 (630 aa).

S64 and S113 each carry phosphoserine. Disordered regions lie at residues 142 to 174 (ADTS…GPQD), 187 to 221 (GMEE…VPGI), 256 to 331 (SPLP…LSPL), and 356 to 475 (QAGS…HTST). A Phosphothreonine modification is found at T149. S151 is modified (phosphoserine; by SIK1 and SIK2). Residues 151 to 167 (SDSALHQSTMTPTQAES) show a composition bias toward polar residues. A Phosphothreonine modification is found at T161. The span at 194-208 (ETDKTLSKQSWDSKK) shows a compositional bias: basic and acidic residues. The short motif at 242-258 (TGGSLPDLSTIHFPSPL) is the Nuclear export signal element. Residues 256-270 (SPLPTPLDPEEPPFP) show a composition bias toward pro residues. Composition is skewed to polar residues over residues 292–301 (GMNTPSSSPQ) and 310–331 (LSLS…LSPL). The segment covering 361 to 384 (QPPPQPQPPPPPPPVSQQQPPPPQ) has biased composition (pro residues). Positions 385–394 (VSVGLPQGGP) are enriched in low complexity. 2 stretches are compositionally biased toward polar residues: residues 414–426 (VPST…TESP) and 450–475 (PATQ…HTST).

It belongs to the TORC family. As to quaternary structure, binds, as a tetramer, through its N-terminal region, with the bZIP domain of CREB1. 'Arg-314' in the bZIP domain of CREB1 is essential for this interaction. Interaction, via its C-terminal, with TAF4, enhances recruitment of TAF4 to CREB1. Interacts with 14-3-3 proteins, including YWHAE/14-3-3 epsilon. Interacts with calmodulin-dependent catalytic subunit PPP3CA/calcineurin A. Phosphorylation/dephosphorylation states of Ser-151 are required for regulating transduction of CREB activity. TORCs are inactive when phosphorylated, and active when dephosphorylated at this site. This primary site of phosphorylation is mediated by SIKs (SIK1 and SIK2), is regulated by cAMP and calcium levels and is dependent on the phosphorylation of SIKs by LKB1. In terms of tissue distribution, highly expressed in developing cortical neurons, peaking during dendrite development.

It localises to the cytoplasm. The protein resides in the nucleus. Functionally, transcriptional coactivator for CREB1 which activates transcription through both consensus and variant cAMP response element (CRE) sites. Acts as a coactivator, in the SIK/TORC signaling pathway, being active when dephosphorylated and acts independently of CREB1 'Ser-133' phosphorylation. Enhances the interaction of CREB1 with TAF4. Regulates the expression of specific CREB-activated genes such as the steroidogenic gene, StAR. Potent coactivator of PGC1alpha and inducer of mitochondrial biogenesis in muscle cells. In the hippocampus, involved in late-phase long-term potentiation (L-LTP) maintenance at the Schaffer collateral-CA1 synapses. May be required for dendritic growth of developing cortical neurons. In concert with SIK1, regulates the light-induced entrainment of the circadian clock. In response to light stimulus, coactivates the CREB-mediated transcription of PER1 which plays an important role in the photic entrainment of the circadian clock. This chain is CREB-regulated transcription coactivator 1 (Crtc1), found in Rattus norvegicus (Rat).